Reading from the N-terminus, the 175-residue chain is RNA pyrophosphohydrolase (175 aa).

The 145-residue stretch at 6–150 (GFRPNVGIVI…KREVYRRVMK (145 aa)) folds into the Nudix hydrolase domain. A Nudix box motif is present at residues 38 to 59 (GGVDDGETPEQAMYRELYEEIG).

Belongs to the Nudix hydrolase family. RppH subfamily. It depends on a divalent metal cation as a cofactor.

Its function is as follows. Accelerates the degradation of transcripts by removing pyrophosphate from the 5'-end of triphosphorylated RNA, leading to a more labile monophosphorylated state that can stimulate subsequent ribonuclease cleavage. This Aeromonas hydrophila subsp. hydrophila (strain ATCC 7966 / DSM 30187 / BCRC 13018 / CCUG 14551 / JCM 1027 / KCTC 2358 / NCIMB 9240 / NCTC 8049) protein is RNA pyrophosphohydrolase.